The chain runs to 365 residues: Carbohydrate sulfotransferase 10 (365 aa).

The Cytoplasmic portion of the chain corresponds to Met1–Leu6. Residues Leu7–Phe27 form a helical; Signal-anchor for type II membrane protein membrane-spanning segment. Over Ser28–Asp356 the chain is Lumenal. N-linked (GlcNAc...) asparagine glycosylation is found at Asn99 and Asn104. Residues Pro132–Gln138 and Arg194–Ser202 each bind 3'-phosphoadenylyl sulfate. N-linked (GlcNAc...) asparagine glycosylation is present at Asn325.

Belongs to the sulfotransferase 2 family.

It is found in the golgi apparatus membrane. Its function is as follows. Catalyzes the transfer of sulfate to position 3 of terminal glucuronic acid of both protein- and lipid-linked oligosaccharides. Participates in biosynthesis of HNK-1 carbohydrate structure, a sulfated glucuronyl-lactosaminyl residue carried by many neural recognition molecules. This is Carbohydrate sulfotransferase 10 (chst10) from Danio rerio (Zebrafish).